A 494-amino-acid chain; its full sequence is Probable cytochrome P450 313a4 (494 aa).

A heme-binding site is contributed by cysteine 440.

The protein belongs to the cytochrome P450 family. The cofactor is heme.

Its subcellular location is the endoplasmic reticulum membrane. The protein resides in the microsome membrane. Functionally, may be involved in the metabolism of insect hormones and in the breakdown of synthetic insecticides. The protein is Probable cytochrome P450 313a4 (Cyp313a4) of Drosophila melanogaster (Fruit fly).